The chain runs to 1956 residues: Histone-lysine N-methyltransferase SETD1B (1956 aa).

A compositionally biased stretch (basic and acidic residues) spans 1–20 (MSFKEAKPGERGKNPEDHGR). The disordered stretch occupies residues 1 to 46 (MSFKEAKPGERGKNPEDHGRKQTASWINGMEAGNQPSTSGEKKSHH). An RRM domain is found at 111-199 (DEFYVGPVPP…NIIHVELDTK (89 aa)). 9 disordered regions span residues 226–478 (LDAS…LEAE), 502–637 (IAGD…VTPS), 662–696 (GFPPLPPPPPPQPGFPMPPPLPPPPPPTHPSVTVP), 926–1148 (KEPP…DEMQ), 1341–1386 (EDLP…TLTS), 1420–1464 (PTFP…VPSP), 1512–1553 (HLTS…NYET), 1627–1655 (TKHKKSRNSRHNNRYDEFSTVPSPEFSPP), and 1766–1790 (IDTQGKSIPAQPQASTRAGSERRSE). 3 stretches are compositionally biased toward polar residues: residues 254-290 (VTPNSSTPFSHDTAYSSSRQGTPNSYSQFTPQSQGTP), 298-312 (PFSQDSSYSSRQTTP), and 346-361 (SSGSYRGTEHTFNVTR). The segment covering 363 to 373 (QPEPVQVPRTP) has biased composition (pro residues). 3 stretches are compositionally biased toward polar residues: residues 375-407 (LSHSSGNYKSAFSPYQGNTVFPQTDESQYPQTS), 416-432 (GPQTSDSYSDAGCNSAS), and 451-464 (DSTTEQKASFSQTP). Residues 517–527 (SPISSSSSQLS) are compositionally biased toward low complexity. 2 stretches are compositionally biased toward polar residues: residues 535-551 (GSRYQDVTPSSRPSSTG) and 575-593 (SLCQNSRSASPIDQINQSG). Basic and acidic residues predominate over residues 594 to 605 (RKTESLDKKELV). Over residues 625-634 (EDMEISDDEV) the composition is skewed to acidic residues. The span at 986 to 1000 (SEGEEEVESEGDDGE) shows a compositional bias: acidic residues. Residues 1001–1011 (TSDKEDSSSEK) show a composition bias toward basic and acidic residues. Residues 1068-1122 (DSSDESEESSEYESSSDSDEKEEEDDEEEELVFGDDQSEDQDLGQEYEVETDREE) are compositionally biased toward acidic residues. Positions 1341-1352 (EDLPRTPGRDIV) are enriched in basic and acidic residues. 2 stretches are compositionally biased toward polar residues: residues 1358 to 1367 (LGKSQSTETV) and 1450 to 1462 (EPTSASLTMNSVP). Residues 1541-1551 (SAHEFETEKNY) are compositionally biased toward basic and acidic residues. Over residues 1628–1638 (KHKKSRNSRHN) the composition is skewed to basic residues. Polar residues predominate over residues 1769–1783 (QGKSIPAQPQASTRA). The short motif at 1788–1793 (RSEQRR) is the RxxxRR motif element. Positions 1817–1934 (KKLRFCKSHI…VNEEITYDYK (118 aa)) constitute an SET domain. Residue Tyr-1933 coordinates S-adenosyl-L-methionine. The Post-SET domain maps to 1940 to 1956 (VKIPCLCGAENCRGTLN).

Belongs to the class V-like SAM-binding methyltransferase superfamily. Component of the SET1B/COMPASS complex.

The protein localises to the nucleus speckle. The protein resides in the chromosome. The catalysed reaction is L-lysyl(4)-[histone H3] + 3 S-adenosyl-L-methionine = N(6),N(6),N(6)-trimethyl-L-lysyl(4)-[histone H3] + 3 S-adenosyl-L-homocysteine + 3 H(+). In terms of biological role, histone methyltransferase that specifically methylates 'Lys-4' of histone H3, when part of the SET1 histone methyltransferase (HMT) complex, but not if the neighboring 'Lys-9' residue is already methylated. H3 'Lys-4' methylation represents a specific tag for epigenetic transcriptional activation. The polypeptide is Histone-lysine N-methyltransferase SETD1B (setd1b) (Xenopus tropicalis (Western clawed frog)).